Consider the following 412-residue polypeptide: Aspartokinase (412 aa).

ACT domains are found at residues 266–340 and 346–412; these read LTIR…GDTN and IVGV…RQGE.

The protein belongs to the aspartokinase family.

The enzyme catalyses L-aspartate + ATP = 4-phospho-L-aspartate + ADP. The protein operates within amino-acid biosynthesis; L-lysine biosynthesis via DAP pathway; (S)-tetrahydrodipicolinate from L-aspartate: step 1/4. It participates in amino-acid biosynthesis; L-methionine biosynthesis via de novo pathway; L-homoserine from L-aspartate: step 1/3. Its pathway is amino-acid biosynthesis; L-threonine biosynthesis; L-threonine from L-aspartate: step 1/5. The protein is Aspartokinase (lysC) of Pseudomonas aeruginosa (strain ATCC 15692 / DSM 22644 / CIP 104116 / JCM 14847 / LMG 12228 / 1C / PRS 101 / PAO1).